A 333-amino-acid polypeptide reads, in one-letter code: Tetraacyldisaccharide 4'-kinase (333 aa).

55-62 (SVGGNGKT) lines the ATP pocket.

It belongs to the LpxK family.

The enzyme catalyses a lipid A disaccharide + ATP = a lipid IVA + ADP + H(+). The protein operates within glycolipid biosynthesis; lipid IV(A) biosynthesis; lipid IV(A) from (3R)-3-hydroxytetradecanoyl-[acyl-carrier-protein] and UDP-N-acetyl-alpha-D-glucosamine: step 6/6. In terms of biological role, transfers the gamma-phosphate of ATP to the 4'-position of a tetraacyldisaccharide 1-phosphate intermediate (termed DS-1-P) to form tetraacyldisaccharide 1,4'-bis-phosphate (lipid IVA). The protein is Tetraacyldisaccharide 4'-kinase of Aeromonas hydrophila subsp. hydrophila (strain ATCC 7966 / DSM 30187 / BCRC 13018 / CCUG 14551 / JCM 1027 / KCTC 2358 / NCIMB 9240 / NCTC 8049).